The sequence spans 89 residues: MALTQERKREIIEQFKIHENDTGSPEVQVAILTEQINNLNEHLRIHKKDHHSRRGLLKMVGKRRNLLAYLRKKDVARYRELIEKLGLRR.

The protein belongs to the universal ribosomal protein uS15 family. As to quaternary structure, part of the 30S ribosomal subunit. Forms a bridge to the 50S subunit in the 70S ribosome, contacting the 23S rRNA.

One of the primary rRNA binding proteins, it binds directly to 16S rRNA where it helps nucleate assembly of the platform of the 30S subunit by binding and bridging several RNA helices of the 16S rRNA. Its function is as follows. Forms an intersubunit bridge (bridge B4) with the 23S rRNA of the 50S subunit in the ribosome. The polypeptide is Small ribosomal subunit protein uS15 (Geobacillus kaustophilus (strain HTA426)).